We begin with the raw amino-acid sequence, 366 residues long: MAVKSSTVDVRAALQSAGAHYMNLIEFGILKVFIDHQIFDHIPAEGSISVTDLATRTKAEVSLLQRFSDYLVASEVLASPAPHELAHTTRSLSYRSEEIAAGFVSHVYHFFLRPMATWTAYFEENGLREPKDAKTIPLGLATGHPEEDLYGVLDKEPRLAYMFNVAQARSAAIFPMKGLYDFAWLREALEDHIGAESPAIVDIGGSHGLALKELLAENPFIPSKRCAVLDFPQTVEQAQQNLDEDLRDIHFIGGSMLEPLPVALHAAGIYQFRRVLSDFVDKDIILALEQVRRVCAPYSRVLIIEELVKASRDKFAIAQDISVLNFGGKRRSEADWHQLASQAGLQVRHVFEQTETAFAVVELGLA.

Residues Gly-204–Gly-205, Asp-230, Ser-255–Met-256, Arg-273, and Arg-274 each bind S-adenosyl-L-methionine.

The protein belongs to the class I-like SAM-binding methyltransferase superfamily. Cation-independent O-methyltransferase family.

The protein operates within secondary metabolite biosynthesis. Methyltransferase; part of the gene cluster that mediates the biosynthesis of the trans-fused decalin-containing tetramic acid phomasetin, the stereochemical opposite of the HIV-1 integrase inhibitor equisetin. The PKS module of phm1 together with the enoylreductase phm4 catalyze the formation of the polyketide unit which is then conjugated to L-serine by the condensation domain of the phm1 NRPS module. Activity of the Dieckmann cyclase domain (RED) of phm1 results in release of the Dieckmann product intermediate. The Diels-Alderase phm7 then uses the Dieckmann product of phm1 as substrate and catalyzes the Diels-Alder cycloaddition to form the decalin ring of N-desmethylphomasetin. N-desmethylphomasetin is further methylated to phomasetin by the methyltransferase phm5. The polypeptide is Methyltransferase phm5 (Pyrenochaetopsis sp).